Here is a 248-residue protein sequence, read N- to C-terminus: MKVTLVGNGRMGQQVAEVISRSNDHEIAAVLDVDARITPEIFHGSDVIIDFTVRQAFMDNLPAMLASGVPVVVGTTGWDDAMEEVRRMVADARASLMYSANFSLGVNIFLRTLREAARLIAPFGQFDIALEEQHHTGKADFPSGTALRAAELVLEANGRKRTIVRQLSDNRKLAAEELQVASVRLGSVFGKHTAFIDSDADEILVAHTAKSRAGFAGGAVHAAEWLAGMHCEKPGFYTMDDFLNERLS.

NAD(+)-binding positions include 74-76 (GTT) and 99-102 (SANF). The active-site Proton donor/acceptor is the His-134. His-135 serves as a coordination point for (S)-2,3,4,5-tetrahydrodipicolinate. The Proton donor role is filled by Lys-138. 144 to 145 (GT) is a binding site for (S)-2,3,4,5-tetrahydrodipicolinate.

The protein belongs to the DapB family.

The protein localises to the cytoplasm. The catalysed reaction is (S)-2,3,4,5-tetrahydrodipicolinate + NAD(+) + H2O = (2S,4S)-4-hydroxy-2,3,4,5-tetrahydrodipicolinate + NADH + H(+). It carries out the reaction (S)-2,3,4,5-tetrahydrodipicolinate + NADP(+) + H2O = (2S,4S)-4-hydroxy-2,3,4,5-tetrahydrodipicolinate + NADPH + H(+). The protein operates within amino-acid biosynthesis; L-lysine biosynthesis via DAP pathway; (S)-tetrahydrodipicolinate from L-aspartate: step 4/4. Catalyzes the conversion of 4-hydroxy-tetrahydrodipicolinate (HTPA) to tetrahydrodipicolinate. This Chlorobium phaeobacteroides (strain DSM 266 / SMG 266 / 2430) protein is 4-hydroxy-tetrahydrodipicolinate reductase.